A 520-amino-acid chain; its full sequence is MAQALAQPPLVVTTVVPDPPPPPPPPHPKPYALRYMADLLGRIGIMDTDKDGNISPQSPRSPRSPRNNILMGKYELGKLLGHGTFAKVYLAQNIKSGDKVAIKVIDKEKIMKSGLVAHIKREISILRRVRHPYIVHLFEVMATKSKIYFVMEYVGGGELFNTVAKGRLPEETARRYFQQLISSVSFCHGRGVYHRDLKPENLLLDNKGNLKVSDFGLSAVAEQLRQDGLCHTFCGTPAYIAPEVLTRKGYDAAKADVWSCGVILFVLMAGHIPFYDKNIMVMYKKIYKGEFRCPRWFSSDLVRLLTRLLDTNPDTRITIPEIMKNRWFKKGFKHVKFYIEDDKLCREDEDEEEEASSSGRSSTVSESDAEFDVKRMGIGSMPRPSSLNAFDIISFSSGFDLSGLFEEEGGEGTRFVSGAPVSKIISKLEEIAKIVSFTVRKKEWSLRLEGCREGAKGPLTIAAEIFELTPSLVVVEVKKKGGDREEYEEFCNKELRPELEKLIHEEVVVEEALYLPSDTE.

2 disordered regions span residues 1–29 (MAQALAQPPLVVTTVVPDPPPPPPPPHPK) and 48–67 (TDKDGNISPQSPRSPRSPRN). Pro residues predominate over residues 17–29 (PDPPPPPPPPHPK). Over residues 55–66 (SPQSPRSPRSPR) the composition is skewed to low complexity. The 255-residue stretch at 74-328 (YELGKLLGHG…IPEIMKNRWF (255 aa)) folds into the Protein kinase domain. ATP contacts are provided by residues 80–88 (LGHGTFAKV) and Lys103. Asp196 (proton acceptor) is an active-site residue. Residues 214 to 243 (DFGLSAVAEQLRQDGLCHTFCGTPAYIAPE) are activation loop. Position 218 is a phosphoserine (Ser218). Thr232 is modified (phosphothreonine). Positions 349–368 (EDEEEEASSSGRSSTVSESD) are disordered. A compositionally biased stretch (low complexity) spans 356 to 366 (SSSGRSSTVSE). An NAF domain is found at 382-406 (PRPSSLNAFDIISFSSGFDLSGLFE). The interval 410–439 (GEGTRFVSGAPVSKIISKLEEIAKIVSFTV) is PPI.

It belongs to the protein kinase superfamily. CAMK Ser/Thr protein kinase family. SNF1 subfamily. Interacts with CBL1 and CBL9. The cofactor is Mn(2+).

It carries out the reaction L-seryl-[protein] + ATP = O-phospho-L-seryl-[protein] + ADP + H(+). It catalyses the reaction L-threonyl-[protein] + ATP = O-phospho-L-threonyl-[protein] + ADP + H(+). Functionally, CIPK serine-threonine protein kinases interact with CBL proteins. Binding of a CBL protein to the regulatory NAF domain of CIPK protein lead to the activation of the kinase in a calcium-dependent manner. This chain is CBL-interacting serine/threonine-protein kinase 18 (CIPK18), found in Arabidopsis thaliana (Mouse-ear cress).